Consider the following 331-residue polypeptide: Glycerol-3-phosphate dehydrogenase [NAD(P)+] (331 aa).

NADPH is bound by residues Ser10, Trp11, and Lys101. Sn-glycerol 3-phosphate is bound by residues Lys101, Gly132, and Ser134. Ala136 provides a ligand contact to NADPH. Lys188, Asp241, Ser251, Arg252, and Asn253 together coordinate sn-glycerol 3-phosphate. The active-site Proton acceptor is the Lys188. Arg252 is a binding site for NADPH. NADPH contacts are provided by Val276 and Glu278.

This sequence belongs to the NAD-dependent glycerol-3-phosphate dehydrogenase family.

Its subcellular location is the cytoplasm. It catalyses the reaction sn-glycerol 3-phosphate + NAD(+) = dihydroxyacetone phosphate + NADH + H(+). The catalysed reaction is sn-glycerol 3-phosphate + NADP(+) = dihydroxyacetone phosphate + NADPH + H(+). The protein operates within membrane lipid metabolism; glycerophospholipid metabolism. In terms of biological role, catalyzes the reduction of the glycolytic intermediate dihydroxyacetone phosphate (DHAP) to sn-glycerol 3-phosphate (G3P), the key precursor for phospholipid synthesis. The polypeptide is Glycerol-3-phosphate dehydrogenase [NAD(P)+] (Acholeplasma laidlawii (strain PG-8A)).